The following is a 215-amino-acid chain: Porin MspB (215 aa).

Residues 1–31 form the signal peptide; that stretch reads MTAFKRVLIAMISALLAGTTGMFVSAGAAHA.

Belongs to the mycobacterial porin (TC 1.B.24) family. In terms of assembly, octamers. Probably forms a goblet with the wide end on the exterior of the outer membrane and a central channel. It is not known if mixed oligomers of MspB with other Msp subunits form in vivo.

It localises to the cell outer membrane. The protein localises to the secreted. It is found in the cell wall. Functionally, a backup porin induced when MspA, the major porin, is deleted. Probably forms a water-filled channel which favors the permeation of cations. There are about 2400 porins in wild-type, 800 in an mspA deletion and 150 in a double mspA-mspC deletion. A triple mspA-mspC-mspD deletion mutant has low but detectable channel activity. Different conductance values with maxima at 2.3 and 4.6 nanosiemens might be caused by a simultaneous reconstitution of MspB channels into the membrane or by the existence of different MspB conformations. This Mycolicibacterium smegmatis (strain ATCC 700084 / mc(2)155) (Mycobacterium smegmatis) protein is Porin MspB (mspB).